Consider the following 398-residue polypeptide: Metalloprotease MmpA (398 aa).

Residue His22 coordinates Zn(2+). Glu23 is a catalytic residue. His26 contacts Zn(2+). Helical transmembrane passes span 117 to 139, 316 to 338, and 362 to 381; these read FIAV…VILV, QFWL…IPVL, and AAGF…FAAW. The PDZ domain occupies 130 to 203; that stretch reads AILVFAVILV…MPIDFAVERD (74 aa).

Belongs to the peptidase M50B family. Zn(2+) serves as cofactor.

The protein localises to the cell inner membrane. Functionally, involved in the regulated intramembrane proteolysis (RIP) of the short isoform of PodJ protein (PodJS), during the swarmer-to-stalked transition. The cleavage occurs near or within the single transmembrane of PodJS thereby releasing the N-terminal segment into the cytoplasm for subsequent degradation. It contributes to preserve asymmetry in the next cell cycle through sequential degradation. The polypeptide is Metalloprotease MmpA (mmpA) (Caulobacter vibrioides (strain ATCC 19089 / CIP 103742 / CB 15) (Caulobacter crescentus)).